The sequence spans 191 residues: Ion-translocating oxidoreductase complex subunit B (191 aa).

The segment at 1–26 is hydrophobic; the sequence is MSLVLVAVLALLGLCLIAGAILGFAA. The 4Fe-4S domain occupies 32-90; sequence EGDPIAEQINALLPQTQCGQCGYPGCKPYAEAIAGGDKINKCPPGGEATIQALADLLDV. The [4Fe-4S] cluster site is built by C49, C52, C57, C73, C114, C117, C120, C124, C144, C147, C150, and C154. 2 4Fe-4S ferredoxin-type domains span residues 105–134 and 135–164; these read MVAF…GAAR and QMHT…MIEV.

This sequence belongs to the 4Fe4S bacterial-type ferredoxin family. RnfB subfamily. In terms of assembly, the complex is composed of six subunits: RnfA, RnfB, RnfC, RnfD, RnfE and RnfG. It depends on [4Fe-4S] cluster as a cofactor.

The protein resides in the cell inner membrane. Functionally, part of a membrane-bound complex that couples electron transfer with translocation of ions across the membrane. This is Ion-translocating oxidoreductase complex subunit B from Ectopseudomonas mendocina (strain ymp) (Pseudomonas mendocina).